An 845-amino-acid chain; its full sequence is MHIIKRNGEPQPYMREKIIVAISAAFRSVQNPLAPEVPAIITDLAAEVERQLFEMNRAGVPVHVEKIQDFVEKTLTKYNHSDEVKSFILYRDDRTKKRIAREQIACCFTDSSVLGVLKEIQQDFPFPEYSLDALASKFLLFKKEVTDERRSMQLLIKAAVELTAQEAPQWELIAARLLMLDFSLALGTSLEKLNIHSFYEKITYLEEAGLYGVYIRTHYSRAEIEEAATYLECSRDKLFTYSSLDMILRRYVIRTRAHVPLETPQEMFLGIALHLAMNETQDRMQWVKRFYTVLSKLQVTVATPTLSNARKPFHQLSSCFVDTVPDSLDGIYRSIDNFSQVSKFGGGMGLYFGKVRAVGAPIRGFQGAAGGILRWIKLANDTAVAVDQLGVRQGSVAVYLDVWHKDIPEFLQLRTNNGDDRMKAHDVFPAVCYPDLFWKTVRDNLGASWYLMCPHEILTVKGYALEDFYAEEWEKRYWDCVKDARISKRTIPIKELVRLVLKSVVETGTPFAFYRDHANRANPNGHRGIIYCSNLCTEIAQNMSAINLVSVKITEVDGQKVVVQTTRPGDFVVCNLASLVLSNIDLSDDKELREVVRVAVRALDNVIDLTYYPVPYAQVTNAYYRAIGLGVSGYHHVLAQQGIDWESDEHLAFADRIFERINRAAIEASMTIAREKGAYGCFTGSDWCTGAYFRKRGYVSEDWQRLQREVATHGMRNGYLLAVAPTSSTSIIAGTTAGVDPIMKQYFLEEKKGMLMPRVAPSLSQKTCPLYKSAHAVEQRWSIRAAGLRQRHIDQAQSVNLYITTDFTLKQVLDLYVYAWEVGMKSLYYVRSQSLEIDLCGYCAS.

The 98-residue stretch at 1 to 98 folds into the ATP-cone domain; it reads MHIIKRNGEP…LYRDDRTKKR (98 aa). Substrate-binding positions include T303, 318–319, G347, 534–538, and 725–729; these read SC, NLCTE, and PTSST. C319 and C574 are oxidised to a cystine. N534 acts as the Proton acceptor in catalysis. The Cysteine radical intermediate role is filled by C536. E538 serves as the catalytic Proton acceptor.

The protein belongs to the ribonucleoside diphosphate reductase large chain family. In terms of assembly, tetramer of two alpha and two beta subunits.

The catalysed reaction is a 2'-deoxyribonucleoside 5'-diphosphate + [thioredoxin]-disulfide + H2O = a ribonucleoside 5'-diphosphate + [thioredoxin]-dithiol. Its activity is regulated as follows. Under complex allosteric control mediated by deoxynucleoside triphosphates and ATP binding. The type of nucleotide bound at the specificity site determines substrate preference. It seems probable that ATP makes the enzyme reduce CDP and UDP, dGTP favors ADP reduction and dTTP favors GDP reduction. Functionally, provides the precursors necessary for DNA synthesis. Catalyzes the biosynthesis of deoxyribonucleotides from the corresponding ribonucleotides. The polypeptide is Ribonucleoside-diphosphate reductase subunit alpha (nrdA) (Treponema pallidum (strain Nichols)).